We begin with the raw amino-acid sequence, 232 residues long: MANEIPTKGILKSEALKQYIMETSAYPREHELLKELRKATVQKYGNLSEMEVPVDEGHFLSMLVKIMNAKNTIEIGVFTGYSLLTTALALPEDGRITAIDIDKEAYEVGLEFIKKAGVDHKINFIHSDGLKALDQLVNDKCEFDFAFADADKSSYVNFHERLLKLVKVGGIIAFDNTLWFGFVAEDEDGVPEHMREYRAALIEFNKKLALDPRVEVSQISIGDGITLCRRLV.

Residue Lys8 participates in substrate binding. S-adenosyl-L-methionine is bound by residues Val52, Glu74, Gly76 to Val77, Ser82, and Asp100. Asp149 provides a ligand contact to substrate. An a divalent metal cation-binding site is contributed by Asp149. Asp151 provides a ligand contact to S-adenosyl-L-methionine. A divalent metal cation-binding residues include Asp175 and Asn176.

It belongs to the class I-like SAM-binding methyltransferase superfamily. Cation-dependent O-methyltransferase family. CCoAMT subfamily. Requires a divalent metal cation as cofactor.

It catalyses the reaction (E)-caffeoyl-CoA + S-adenosyl-L-methionine = (E)-feruloyl-CoA + S-adenosyl-L-homocysteine + H(+). It functions in the pathway aromatic compound metabolism; phenylpropanoid biosynthesis. In terms of biological role, methylates caffeoyl-CoA to feruloyl-CoA and 5-hydroxyferuloyl-CoA to sinapoyl-CoA. Plays a role in the synthesis of feruloylated polysaccharides. Involved in the reinforcement of the plant cell wall. Also involved in the responding to wounding or pathogen challenge by the increased formation of cell wall-bound ferulic acid polymers. This is Putative caffeoyl-CoA O-methyltransferase At1g67980 from Arabidopsis thaliana (Mouse-ear cress).